A 261-amino-acid polypeptide reads, in one-letter code: MTHQTHAYHMVNPSPWPLTGALSALLMTSGLIMWFHFNSTALLMLGLTTNMLTMYQWWRDIIRESTFQGHHTPVVQKGLRYGMILFIISEVLFFTGFFWAFYHSSLAPTPELGGCWPPTGINPLNPLEVPLLNTSVLLASGVSITWAHHSLMEGNRSHMLQALFITITLGVYFTLLQASEYYEAPFTISDGVYGSTFFVATGFHGLHVIIGSTFLIVCFFRQLKFHFTSNHHFGFEAAAWYWHFVDVVWLFLYVSIYWWGS.

Residues 1–15 (MTHQTHAYHMVNPSP) are Mitochondrial matrix-facing. Residues 16-34 (WPLTGALSALLMTSGLIMW) traverse the membrane as a helical segment. Over 35 to 40 (FHFNST) the chain is Mitochondrial intermembrane. The chain crosses the membrane as a helical span at residues 41-66 (ALLMLGLTTNMLTMYQWWRDIIREST). The Mitochondrial matrix segment spans residues 67-72 (FQGHHT). A helical transmembrane segment spans residues 73-105 (PVVQKGLRYGMILFIISEVLFFTGFFWAFYHSS). The Mitochondrial intermembrane portion of the chain corresponds to 106–128 (LAPTPELGGCWPPTGINPLNPLE). The chain crosses the membrane as a helical span at residues 129-152 (VPLLNTSVLLASGVSITWAHHSLM). Residues 153 to 155 (EGN) are Mitochondrial matrix-facing. A helical transmembrane segment spans residues 156–183 (RSHMLQALFITITLGVYFTLLQASEYYE). Topologically, residues 184 to 190 (APFTISD) are mitochondrial intermembrane. A helical membrane pass occupies residues 191–223 (GVYGSTFFVATGFHGLHVIIGSTFLIVCFFRQL). Topologically, residues 224-232 (KFHFTSNHH) are mitochondrial matrix. Residues 233–256 (FGFEAAAWYWHFVDVVWLFLYVSI) traverse the membrane as a helical segment. The Mitochondrial intermembrane portion of the chain corresponds to 257–261 (YWWGS).

The protein belongs to the cytochrome c oxidase subunit 3 family. As to quaternary structure, component of the cytochrome c oxidase (complex IV, CIV), a multisubunit enzyme composed of 14 subunits. The complex is composed of a catalytic core of 3 subunits MT-CO1, MT-CO2 and MT-CO3, encoded in the mitochondrial DNA, and 11 supernumerary subunits COX4I, COX5A, COX5B, COX6A, COX6B, COX6C, COX7A, COX7B, COX7C, COX8 and NDUFA4, which are encoded in the nuclear genome. The complex exists as a monomer or a dimer and forms supercomplexes (SCs) in the inner mitochondrial membrane with NADH-ubiquinone oxidoreductase (complex I, CI) and ubiquinol-cytochrome c oxidoreductase (cytochrome b-c1 complex, complex III, CIII), resulting in different assemblies (supercomplex SCI(1)III(2)IV(1) and megacomplex MCI(2)III(2)IV(2)).

Its subcellular location is the mitochondrion inner membrane. The enzyme catalyses 4 Fe(II)-[cytochrome c] + O2 + 8 H(+)(in) = 4 Fe(III)-[cytochrome c] + 2 H2O + 4 H(+)(out). Functionally, component of the cytochrome c oxidase, the last enzyme in the mitochondrial electron transport chain which drives oxidative phosphorylation. The respiratory chain contains 3 multisubunit complexes succinate dehydrogenase (complex II, CII), ubiquinol-cytochrome c oxidoreductase (cytochrome b-c1 complex, complex III, CIII) and cytochrome c oxidase (complex IV, CIV), that cooperate to transfer electrons derived from NADH and succinate to molecular oxygen, creating an electrochemical gradient over the inner membrane that drives transmembrane transport and the ATP synthase. Cytochrome c oxidase is the component of the respiratory chain that catalyzes the reduction of oxygen to water. Electrons originating from reduced cytochrome c in the intermembrane space (IMS) are transferred via the dinuclear copper A center (CU(A)) of subunit 2 and heme A of subunit 1 to the active site in subunit 1, a binuclear center (BNC) formed by heme A3 and copper B (CU(B)). The BNC reduces molecular oxygen to 2 water molecules using 4 electrons from cytochrome c in the IMS and 4 protons from the mitochondrial matrix. This chain is Cytochrome c oxidase subunit 3 (MT-CO3), found in Syncerus caffer (African buffalo).